Reading from the N-terminus, the 281-residue chain is Phosphatidylglycerol--prolipoprotein diacylglyceryl transferase (281 aa).

Transmembrane regions (helical) follow at residues 11–31 (IIFT…VISF), 57–77 (LLYS…IIFY), 89–109 (VFYI…AIIV), 121–141 (ILEI…AGRI), 194–214 (PTQL…IYFF), 222–242 (GSIS…IEFF), and 255–275 (IITM…IIMY). Arginine 140 is an a 1,2-diacyl-sn-glycero-3-phospho-(1'-sn-glycerol) binding site.

It belongs to the Lgt family.

The protein localises to the cell inner membrane. The catalysed reaction is L-cysteinyl-[prolipoprotein] + a 1,2-diacyl-sn-glycero-3-phospho-(1'-sn-glycerol) = an S-1,2-diacyl-sn-glyceryl-L-cysteinyl-[prolipoprotein] + sn-glycerol 1-phosphate + H(+). The protein operates within protein modification; lipoprotein biosynthesis (diacylglyceryl transfer). Its function is as follows. Catalyzes the transfer of the diacylglyceryl group from phosphatidylglycerol to the sulfhydryl group of the N-terminal cysteine of a prolipoprotein, the first step in the formation of mature lipoproteins. This is Phosphatidylglycerol--prolipoprotein diacylglyceryl transferase from Buchnera aphidicola subsp. Acyrthosiphon pisum (strain 5A).